The chain runs to 304 residues: Granaticin polyketide synthase bifunctional cyclase/dehydratase (304 aa).

The protein operates within antifungal biosynthesis; monensin biosynthesis. In terms of biological role, is needed for correct cyclization of the oligoketide leading to isochromanequinone formation. The chain is Granaticin polyketide synthase bifunctional cyclase/dehydratase from Streptomyces virginiae (Streptomyces cinnamonensis).